Consider the following 248-residue polypeptide: Probable transcriptional regulatory protein RHOS4_22610 (248 aa).

Residues 1-21 are disordered; it reads MAGHSKWANIQHRKGKQDKLR.

It belongs to the TACO1 family.

It is found in the cytoplasm. The sequence is that of Probable transcriptional regulatory protein RHOS4_22610 from Cereibacter sphaeroides (strain ATCC 17023 / DSM 158 / JCM 6121 / CCUG 31486 / LMG 2827 / NBRC 12203 / NCIMB 8253 / ATH 2.4.1.) (Rhodobacter sphaeroides).